A 131-amino-acid polypeptide reads, in one-letter code: Phosphomevalonate dehydratase small subunit (131 aa).

Ser-62 functions as the Proton acceptor in the catalytic mechanism.

Belongs to the AcnX type II small subunit family. Heterodimer composed of a large subunit (PMDh-L) and a small subunit (PMDh-S).

It carries out the reaction (R)-5-phosphomevalonate = (2E)-3-methyl-5-phosphooxypent-2-enoate + H2O. It functions in the pathway isoprenoid biosynthesis; isopentenyl diphosphate biosynthesis via mevalonate pathway. Its function is as follows. Component of a hydro-lyase that catalyzes the dehydration of mevalonate 5-phosphate (MVA5P) to form trans-anhydromevalonate 5-phosphate (tAHMP). Involved in the archaeal mevalonate (MVA) pathway, which provides fundamental precursors for isoprenoid biosynthesis, such as isopentenyl diphosphate (IPP) and dimethylallyl diphosphate (DMAPP). This Methanothermobacter thermautotrophicus (strain ATCC 29096 / DSM 1053 / JCM 10044 / NBRC 100330 / Delta H) (Methanobacterium thermoautotrophicum) protein is Phosphomevalonate dehydratase small subunit.